The following is a 251-amino-acid chain: DNA repair protein RecO (251 aa).

This sequence belongs to the RecO family.

In terms of biological role, involved in DNA repair and RecF pathway recombination. This is DNA repair protein RecO from Lactococcus lactis subsp. cremoris (strain MG1363).